A 69-amino-acid polypeptide reads, in one-letter code: Cold shock-like protein CspC (69 aa).

The region spanning Gly6–Val66 is the CSD domain.

Its subcellular location is the cytoplasm. This is Cold shock-like protein CspC (cspC) from Shigella flexneri.